The chain runs to 231 residues: Large ribosomal subunit protein uL1 (231 aa).

This sequence belongs to the universal ribosomal protein uL1 family. In terms of assembly, part of the 50S ribosomal subunit.

Functionally, binds directly to 23S rRNA. The L1 stalk is quite mobile in the ribosome, and is involved in E site tRNA release. Protein L1 is also a translational repressor protein, it controls the translation of the L11 operon by binding to its mRNA. The polypeptide is Large ribosomal subunit protein uL1 (Polaromonas naphthalenivorans (strain CJ2)).